The sequence spans 397 residues: Lysophospholipid transporter LplT (397 aa).

The Periplasmic portion of the chain corresponds to 1 to 17; sequence MSESVHTNTSLWSKGMK. A helical membrane pass occupies residues 18–38; that stretch reads AVIVAQFLSAFGDNALLFATL. Residues 39–52 lie on the Cytoplasmic side of the membrane; the sequence is ALLKAQFYPEWSQP. Residues 53 to 73 form a helical membrane-spanning segment; the sequence is ILQMVFVGAYILFAPFVGQVA. Residues 74-90 lie on the Periplasmic side of the membrane; it reads DSFAKGRVMMFANGLKL. The chain crosses the membrane as a helical span at residues 91–111; the sequence is LGAASICFGINPFLGYTLVGV. Over 112–144 the chain is Cytoplasmic; it reads GAAAYSPAKYGILGELTTGSKLVKANGLMEAST. A helical transmembrane segment spans residues 145–165; the sequence is IAAILLGSVAGGVLADWHVLV. Position 166 (A166) is a topological domain, periplasmic. The chain crosses the membrane as a helical span at residues 167-187; it reads LAACALAYGGAVVANIYIPKL. Residues 188 to 226 are Cytoplasmic-facing; the sequence is AAARPGQSWNLINMTRSFLNACTSLWRNGETRFSLVGTS. The helical transmembrane segment at 227 to 247 threads the bilayer; the sequence is LFWGAGVTLRFLLVLWVPVAL. At 248–256 the chain is on the periplasmic side; it reads GITDNATPT. Residues 257–277 form a helical membrane-spanning segment; that stretch reads YLNAMVAIGIVVGAGAAAKLV. Residues 278–280 lie on the Cytoplasmic side of the membrane; sequence TLE. The helical transmembrane segment at 281-301 threads the bilayer; that stretch reads TVSRCMPAGILIGVVVLIFSL. Residues 302–304 are Periplasmic-facing; it reads QHE. A helical membrane pass occupies residues 305-325; that stretch reads LLPAYALLMLIGVLGGFFVVP. Residues 326–343 lie on the Cytoplasmic side of the membrane; sequence LNALLQERGKKSVGAGNA. Residues 344-364 traverse the membrane as a helical segment; that stretch reads IAVQNLGENSAMLLMLGIYSL. Residues 365–366 are Periplasmic-facing; that stretch reads AV. A helical membrane pass occupies residues 367–387; sequence MVGIPVVPIGIGFGALFALAI. Over 388–397 the chain is Cytoplasmic; that stretch reads TALWIWQRRY.

The protein belongs to the major facilitator superfamily. LplT (TC 2.A.1.42) family.

The protein resides in the cell inner membrane. Functionally, catalyzes the facilitated diffusion of 2-acyl-glycero-3-phosphoethanolamine (2-acyl-GPE) into the cell. The sequence is that of Lysophospholipid transporter LplT from Escherichia coli O127:H6 (strain E2348/69 / EPEC).